A 216-amino-acid chain; its full sequence is Thiopurine S-methyltransferase (216 aa).

Residues tryptophan 10, leucine 45, glutamate 66, and arginine 123 each contribute to the S-adenosyl-L-methionine site.

Belongs to the class I-like SAM-binding methyltransferase superfamily. TPMT family.

The protein resides in the cytoplasm. The catalysed reaction is S-adenosyl-L-methionine + a thiopurine = S-adenosyl-L-homocysteine + a thiopurine S-methylether.. The protein is Thiopurine S-methyltransferase of Pseudomonas putida (strain ATCC 700007 / DSM 6899 / JCM 31910 / BCRC 17059 / LMG 24140 / F1).